We begin with the raw amino-acid sequence, 132 residues long: Small ribosomal subunit protein uS8 (132 aa).

The protein belongs to the universal ribosomal protein uS8 family. In terms of assembly, part of the 30S ribosomal subunit. Contacts proteins S5 and S12.

One of the primary rRNA binding proteins, it binds directly to 16S rRNA central domain where it helps coordinate assembly of the platform of the 30S subunit. The polypeptide is Small ribosomal subunit protein uS8 (Corynebacterium efficiens (strain DSM 44549 / YS-314 / AJ 12310 / JCM 11189 / NBRC 100395)).